A 663-amino-acid polypeptide reads, in one-letter code: tRNA (guanine(26)-N(2))-dimethyltransferase (663 aa).

The N-terminal 16 residues, 1–16, are a transit peptide targeting the mitochondrion; the sequence is MSLARTILWLSRPLRP. Positions 56-498 constitute a Trm1 methyltransferase domain; it reads ATVTEGAAKI…APPEALWDIM (443 aa). S-adenosyl-L-methionine is bound at residue Arg-83. Residue Ser-121 is modified to Phosphoserine. Residues Arg-165 and Asp-183 each contribute to the S-adenosyl-L-methionine site. The Zn(2+) site is built by Cys-347, Cys-350, Cys-383, and Cys-386. Ser-516 carries the post-translational modification Phosphoserine. The disordered stretch occupies residues 534–574; the sequence is IREDANPSSRQRGLKRFQANPEANWGPRPRARPGGKAASED. Residues 540–572 carry the Nuclear localization signal motif; that stretch reads PSSRQRGLKRFQANPEANWGPRPRARPGGKAAS. Residues 599-626 form a C3H1-type zinc finger; the sequence is RLKTFPCKRFKEGTCQLGDQCCYSHSPA. Ser-624 carries the phosphoserine modification. The interval 632 to 663 is disordered; that stretch reads GDIPIEECPETTTKISPGPKAAAGGIPGPGVD.

It belongs to the class I-like SAM-binding methyltransferase superfamily. Trm1 family.

The protein localises to the mitochondrion. It localises to the nucleus. Its subcellular location is the cytoplasm. The enzyme catalyses guanosine(26) in tRNA + 2 S-adenosyl-L-methionine = N(2)-dimethylguanosine(26) in tRNA + 2 S-adenosyl-L-homocysteine + 2 H(+). Dimethylates a single guanine residue at position 26 of most nuclear- and mitochondrial-encoded tRNAs using S-adenosyl-L-methionine as donor of the methyl groups. tRNA guanine(26)-dimethylation is required for redox homeostasis and ensure proper cellular proliferation and oxidative stress survival. The protein is tRNA (guanine(26)-N(2))-dimethyltransferase of Mus musculus (Mouse).